Reading from the N-terminus, the 123-residue chain is uncharacterized protein (123 aa).

This is an uncharacterized protein from Bacillus subtilis (strain 168).